A 188-amino-acid polypeptide reads, in one-letter code: Elongation factor P (188 aa).

This sequence belongs to the elongation factor P family.

The protein localises to the cytoplasm. It functions in the pathway protein biosynthesis; polypeptide chain elongation. In terms of biological role, involved in peptide bond synthesis. Stimulates efficient translation and peptide-bond synthesis on native or reconstituted 70S ribosomes in vitro. Probably functions indirectly by altering the affinity of the ribosome for aminoacyl-tRNA, thus increasing their reactivity as acceptors for peptidyl transferase. This chain is Elongation factor P, found in Exiguobacterium sp. (strain ATCC BAA-1283 / AT1b).